We begin with the raw amino-acid sequence, 404 residues long: Argininosuccinate synthase (404 aa).

ATP-binding positions include 10-18 (AFSGGLDTS) and alanine 37. Tyrosine 88 and serine 93 together coordinate L-citrulline. Glycine 118 is a binding site for ATP. Residues threonine 120, asparagine 124, and aspartate 125 each contribute to the L-aspartate site. An L-citrulline-binding site is contributed by asparagine 124. Arginine 128, serine 179, serine 188, glutamate 264, and tyrosine 276 together coordinate L-citrulline.

This sequence belongs to the argininosuccinate synthase family. Type 1 subfamily. In terms of assembly, homotetramer.

It localises to the cytoplasm. It catalyses the reaction L-citrulline + L-aspartate + ATP = 2-(N(omega)-L-arginino)succinate + AMP + diphosphate + H(+). The protein operates within amino-acid biosynthesis; L-arginine biosynthesis; L-arginine from L-ornithine and carbamoyl phosphate: step 2/3. This chain is Argininosuccinate synthase, found in Nitrosomonas eutropha (strain DSM 101675 / C91 / Nm57).